We begin with the raw amino-acid sequence, 171 residues long: 3-hydroxydecanoyl-[acyl-carrier-protein] dehydratase (171 aa).

His-70 is an active-site residue.

It belongs to the thioester dehydratase family. FabA subfamily. As to quaternary structure, homodimer.

It is found in the cytoplasm. The enzyme catalyses a (3R)-hydroxyacyl-[ACP] = a (2E)-enoyl-[ACP] + H2O. It carries out the reaction (3R)-hydroxydecanoyl-[ACP] = (2E)-decenoyl-[ACP] + H2O. The catalysed reaction is (2E)-decenoyl-[ACP] = (3Z)-decenoyl-[ACP]. The protein operates within lipid metabolism; fatty acid biosynthesis. Necessary for the introduction of cis unsaturation into fatty acids. Catalyzes the dehydration of (3R)-3-hydroxydecanoyl-ACP to E-(2)-decenoyl-ACP and then its isomerization to Z-(3)-decenoyl-ACP. Can catalyze the dehydratase reaction for beta-hydroxyacyl-ACPs with saturated chain lengths up to 16:0, being most active on intermediate chain length. The protein is 3-hydroxydecanoyl-[acyl-carrier-protein] dehydratase of Pseudomonas syringae pv. syringae (strain B728a).